Consider the following 846-residue polypeptide: Major vault protein beta (846 aa).

A2 carries the post-translational modification N-acetylalanine. MVP repeat units follow at residues 2–60 (ATPV…IPPR), 61–115 (QYCI…QPVP), 116–172 (LQVI…EPVR), 173–225 (AVII…GFIQ), 226–280 (ALVL…RDIK), 281–332 (AITL…IQNV), 333–388 (NVLS…RRKR), 389–458 (IPLD…STKV), and 459–521 (ITYR…FLGP).

As to quaternary structure, the vault ribonucleoprotein particle is a huge (400 A x 670 A) cage structure of 12.9 MDa. It consists of a dimer of half-vaults, with each half-vault comprising 39 identical major vault protein (MVP) chains. Dictyostelium is one of the few organisms in which the major component is actually two proteins (alpha and beta).

Its subcellular location is the cytoplasm. It is found in the nucleus. Its function is as follows. Unknown, though MVP-beta is required for normal vault structure. The chain is Major vault protein beta (mvpB) from Dictyostelium discoideum (Social amoeba).